A 109-amino-acid polypeptide reads, in one-letter code: Large ribosomal subunit protein uL22 (109 aa).

The protein belongs to the universal ribosomal protein uL22 family. In terms of assembly, part of the 50S ribosomal subunit.

In terms of biological role, this protein binds specifically to 23S rRNA; its binding is stimulated by other ribosomal proteins, e.g. L4, L17, and L20. It is important during the early stages of 50S assembly. It makes multiple contacts with different domains of the 23S rRNA in the assembled 50S subunit and ribosome. Its function is as follows. The globular domain of the protein is located near the polypeptide exit tunnel on the outside of the subunit, while an extended beta-hairpin is found that lines the wall of the exit tunnel in the center of the 70S ribosome. This is Large ribosomal subunit protein uL22 from Paraburkholderia xenovorans (strain LB400).